The primary structure comprises 175 residues: uncharacterized protein (175 aa).

This is an uncharacterized protein from Methanocaldococcus jannaschii (strain ATCC 43067 / DSM 2661 / JAL-1 / JCM 10045 / NBRC 100440) (Methanococcus jannaschii).